We begin with the raw amino-acid sequence, 560 residues long: 2-succinylbenzoate--CoA ligase, chloroplastic/peroxisomal (560 aa).

Residues 1-15 constitute a chloroplast transit peptide; the sequence is MANHSRPHICQCLTR. 3 helical membrane-spanning segments follow: residues 69–89, 189–209, and 225–245; these read LFLEWLLAVALVGGVVAPLNY, GVTISHLAFITQSLAKIAIAG, and IGGLSSAMAMLMVGACHVLLP. The Microbody targeting signal motif lies at 558 to 560; sequence SSL.

Belongs to the ATP-dependent AMP-binding enzyme family. MenE subfamily. As to expression, high expression in young leaves and flowers. Not expressed in roots.

It localises to the plastid. The protein resides in the chloroplast membrane. It is found in the peroxisome membrane. It catalyses the reaction 2-succinylbenzoate + ATP + CoA = 2-succinylbenzoyl-CoA + AMP + diphosphate. Its function is as follows. Involved in the biosynthesis of phylloquinone (vitamin K1). Converts 2-succinylbenzoate (OSB) to 2-succinylbenzoyl-CoA (OSB-CoA). The protein is 2-succinylbenzoate--CoA ligase, chloroplastic/peroxisomal (AAE14) of Arabidopsis thaliana (Mouse-ear cress).